The following is a 319-amino-acid chain: MTEPTVARPDIDPVLKMLLDTFPVTFTAADGVEVARARLRQLKTPPELLPELRIEERTVGYDGLTDIPVRVYWPPVVRDNLPVVVYYHGGGWSLGGLDTHDPVARAHAVGAQAIVVSVDYRLAPEHPYPAGIDDSWAALRWVGENAAELGGDPSRIAVAGDSAGGNISAVMAQLARDVGGPPLVFQLLWYPTTMADLSLPSFTENADAPILDRDVIDAFLAWYVPGLDISDHTMLPTTLAPGNADLSGLPPAFIGTAEHDPLRDDGACYAELLTAAGVSVELSNEPTMVHGYVNFALVVPAAAEATGRGLAALKRALHA.

The Involved in the stabilization of the negatively charged intermediate by the formation of the oxyanion hole motif lies at 88–90 (HGG). Catalysis depends on residues S162, D260, and H290.

This sequence belongs to the 'GDXG' lipolytic enzyme family. In terms of assembly, monomer.

The enzyme catalyses a carboxylic ester + H2O = an alcohol + a carboxylate + H(+). Its function is as follows. Hydrolyzes various short-chain esters. The chain is Carboxylesterase NlhH (nlhH) from Mycobacterium tuberculosis (strain CDC 1551 / Oshkosh).